We begin with the raw amino-acid sequence, 231 residues long: Ribose-5-phosphate isomerase A (231 aa).

Substrate is bound by residues 32–35, 85–88, and 98–101; these read TGST, DGAD, and KGGG. Glu107 (proton acceptor) is an active-site residue. Lys125 provides a ligand contact to substrate.

This sequence belongs to the ribose 5-phosphate isomerase family. Homodimer.

The enzyme catalyses aldehydo-D-ribose 5-phosphate = D-ribulose 5-phosphate. The protein operates within carbohydrate degradation; pentose phosphate pathway; D-ribose 5-phosphate from D-ribulose 5-phosphate (non-oxidative stage): step 1/1. Functionally, catalyzes the reversible conversion of ribose-5-phosphate to ribulose 5-phosphate. In Paraburkholderia phytofirmans (strain DSM 17436 / LMG 22146 / PsJN) (Burkholderia phytofirmans), this protein is Ribose-5-phosphate isomerase A.